We begin with the raw amino-acid sequence, 502 residues long: Cytochrome P450 71B10 (502 aa).

The chain crosses the membrane as a helical span at residues 1 to 21 (MTVLWFVSLILLISILLVAVK). C443 serves as a coordination point for heme.

It belongs to the cytochrome P450 family. Requires heme as cofactor.

It is found in the membrane. The chain is Cytochrome P450 71B10 (CYP71B10) from Arabidopsis thaliana (Mouse-ear cress).